We begin with the raw amino-acid sequence, 337 residues long: 4-hydroxyproline 2-epimerase (337 aa).

Residue Cys91 is the Proton acceptor of the active site. Residues 92 to 93 (GH), Asp252, and 257 to 258 (GT) contribute to the substrate site.

It belongs to the proline racemase family.

The catalysed reaction is trans-4-hydroxy-L-proline = cis-4-hydroxy-D-proline. Functionally, catalyzes the epimerization of trans-4-hydroxy-L-proline (t4LHyp) to cis-4-hydroxy-D-proline (c4DHyp). Is likely involved in a degradation pathway that converts t4LHyp to alpha-ketoglutarate. Displays no proline racemase activity. The polypeptide is 4-hydroxyproline 2-epimerase (Cereibacter sphaeroides (strain ATCC 17029 / ATH 2.4.9) (Rhodobacter sphaeroides)).